The chain runs to 252 residues: Type I iodothyronine deiodinase (252 aa).

Residues 1 to 17 (MESLLQTIKLMLRYIQK) are Extracellular-facing. The chain crosses the membrane as a helical; Signal-anchor for type III membrane protein span at residues 18-38 (ALILFFLFLYVVVGKVLMFLF). The Cytoplasmic portion of the chain corresponds to 39–252 (PQTMASVLKS…EVCSVLEKKK (214 aa)). Sec130 is a catalytic residue. Residue Sec130 is a non-standard amino acid, selenocysteine.

This sequence belongs to the iodothyronine deiodinase family. In terms of assembly, predominantly monomer. Can form homodimers but homodimerization is not essential for enzyme activity.

It localises to the cell membrane. It is found in the endoplasmic reticulum membrane. The protein localises to the basolateral cell membrane. It carries out the reaction 3,3',5-triiodo-L-thyronine + iodide + A + H(+) = L-thyroxine + AH2. The catalysed reaction is 3,3',5'-triiodo-L-thyronine + iodide + A + H(+) = L-thyroxine + AH2. The enzyme catalyses 3,3'-diiodo-L-thyronine + iodide + A + H(+) = 3,3',5'-triiodo-L-thyronine + AH2. It catalyses the reaction 3,3'-diiodo-L-thyronine + iodide + A + H(+) = 3,3',5-triiodo-L-thyronine + AH2. It carries out the reaction 3'-iodo-L-thyronine + iodide + A + H(+) = 3',5'-diiodo-L-thyronine + AH2. The catalysed reaction is 3-iodo-L-thyronine + iodide + A + H(+) = 3,5-diiodo-L-thyronine + AH2. The enzyme catalyses 3-iodo-L-thyronine + iodide + A + H(+) = 3,3'-diiodo-L-thyronine + AH2. It catalyses the reaction 3,3'-diiodothyronamine + iodide + A + H(+) = 3,3',5'-triiodothyronamine + AH2. It carries out the reaction 3'-iodothyronamine + iodide + A + H(+) = 3',5'-diiodothyronamine + AH2. The catalysed reaction is 3-iodothyronamine + iodide + A + H(+) = 3,3'-diiodothyronamine + AH2. The enzyme catalyses 3,3'-diiodothyronamine + iodide + A + H(+) = 3,3',5-triiodothyronamine + AH2. It catalyses the reaction 3-iodothyronamine + iodide + A + H(+) = 3,5-diiodothyronamine + AH2. It carries out the reaction 3,3'-diiodo-L-thyronine sulfate + iodide + A + H(+) = 3,3',5'-triiodo-L-thyronine sulfate + AH2. The catalysed reaction is 3,3',5'-triiodo-L-thyronine sulfate + iodide + A + H(+) = L-thyroxine sulfate + AH2. The enzyme catalyses 3,3'-diiodo-L-thyronine sulfate + iodide + A + H(+) = 3,3',5-triiodo-L-thyronine sulfate + AH2. With respect to regulation, lacks sensitivity to 6-n-propylthiouracil. Its function is as follows. Plays a crucial role in the metabolism of thyroid hormones (TH) and has specific roles in TH activation and inactivation by deiodination. Catalyzes the deiodination of L-thyroxine (T4) to 3,5,3'-triiodothyronine (T3) and 3,3',5'-triiodothyronine (rT3) to 3,3'-diiodothyronine (3,3'-T2) via outer-ring deiodination (ORD). Catalyzes the deiodiantion of T4 to rT3 and T3 to 3,3'-T2 via inner-ring deiodination (IRD). Catalyzes the deiodination of 3',5'-diiodothyronine (3',5'-T2) to 3'-monoiodothyronine (3'-T1) via ORD. Catalyzes the deiodination of 3,5-diiodothyronine (3,5-T2) to 3-monoiodothyronine (3-T1) and 3,3'-T2 to 3-T1 via IRD. Catalyzes the phenolic ring deiodinations of 3,3',5'-triiodothyronamine, 3',5'-diiodothyronamine and 3,3'-diiodothyronamine as well as tyrosyl ring deiodinations of 3,5,3'-triiodothyronamine and 3,5-diiodothyronamine. Catalyzes the deiodination of L-thyroxine sulfate and 3,3',5-triiodo-L-thyronine sulfate via IRD and of 3,3',5'-triiodo-L-thyronine sulfate via ORD. The protein is Type I iodothyronine deiodinase (dio1) of Xenopus laevis (African clawed frog).